The chain runs to 962 residues: Atromentin synthetase nps3 (962 aa).

An adenylation (A) domain region spans residues 55-469 (FISSSAHDSS…SGRIKDTVIV (415 aa)). Positions 601–679 (VPATITETAF…DLAKYIDALV (79 aa)) constitute a Carrier domain. Positions 606-676 (TETAFAKIFA…VLRDLAKYID (71 aa)) are thiolation and peptide carrier (T) domain. The residue at position 638 (Ser-638) is an O-(pantetheine 4'-phosphoryl)serine. A thioesterase (TE) domain region spans residues 702 to 805 (PIFFVHPGVG…VGLINIPPHI (104 aa)).

This sequence belongs to the ATP-dependent AMP-binding enzyme family.

It participates in secondary metabolite biosynthesis. Functionally, an L-tyrosine:2-oxoglutarate aminotransferase (probably amt1) and atromentin synthetase nps3 catalyze consecutive steps to turn over L-tyrosine into atromentin, which represents the generic precursor molecule for the entire terphenylquinone and pulvinic acid family of pigments, which are widely distributed secondary metabolites in homobasidiomycetes. The first step catalyzed by the aminotransferase converts L-tyrosine in to 4-hydroxyphenylpyruvate (4-HPP). Adenylation of two 4-HPP monomers by the nps3 adenylation (A) domain, covalent tethering of the monomers as a thioester and oxoester onto the nps3 thiolation (T) and thioesterase (TE) domains, respectively, and symmetric C-C-bond formation between two monomers catalyzed by the nps3 TE domain leads to atromentin. Follow-up products of atromentin in S.lacrymans include atromentic acid, xerocomic acid, isoxerocomic acid and variegatic acid. This is Atromentin synthetase nps3 (nps3) from Serpula lacrymans var. lacrymans (strain S7.9) (Dry rot fungus).